The primary structure comprises 392 residues: 1-deoxy-D-xylulose 5-phosphate reductoisomerase (392 aa).

NADPH-binding residues include threonine 10, glycine 11, serine 12, isoleucine 13, arginine 37, glutamine 38, and asparagine 124. Position 125 (lysine 125) interacts with 1-deoxy-D-xylulose 5-phosphate. Glutamate 126 contacts NADPH. Residue aspartate 150 coordinates Mn(2+). 1-deoxy-D-xylulose 5-phosphate-binding residues include serine 151, glutamate 152, serine 179, and histidine 202. Residue glutamate 152 coordinates Mn(2+). Glycine 208 provides a ligand contact to NADPH. Positions 215, 220, 221, and 224 each coordinate 1-deoxy-D-xylulose 5-phosphate. Residue glutamate 224 coordinates Mn(2+).

The protein belongs to the DXR family. The cofactor is Mg(2+). It depends on Mn(2+) as a cofactor.

The catalysed reaction is 2-C-methyl-D-erythritol 4-phosphate + NADP(+) = 1-deoxy-D-xylulose 5-phosphate + NADPH + H(+). Its pathway is isoprenoid biosynthesis; isopentenyl diphosphate biosynthesis via DXP pathway; isopentenyl diphosphate from 1-deoxy-D-xylulose 5-phosphate: step 1/6. Functionally, catalyzes the NADPH-dependent rearrangement and reduction of 1-deoxy-D-xylulose-5-phosphate (DXP) to 2-C-methyl-D-erythritol 4-phosphate (MEP). The chain is 1-deoxy-D-xylulose 5-phosphate reductoisomerase from Cupriavidus metallidurans (strain ATCC 43123 / DSM 2839 / NBRC 102507 / CH34) (Ralstonia metallidurans).